The following is a 394-amino-acid chain: p-hydroxybenzoate hydroxylase (394 aa).

FAD contacts are provided by residues Ser13, Glu32, 42–47 (RIRAGV), and Gln102. Substrate contacts are provided by residues Tyr201, 212–214 (SQR), and Tyr222. Asp286 is an FAD binding site. Pro293 provides a ligand contact to substrate. 299-300 (LN) provides a ligand contact to FAD.

This sequence belongs to the aromatic-ring hydroxylase family. Homodimer. FAD is required as a cofactor.

The catalysed reaction is 4-hydroxybenzoate + NADPH + O2 + H(+) = 3,4-dihydroxybenzoate + NADP(+) + H2O. The protein operates within aromatic compound metabolism; benzoate degradation via hydroxylation; 3,4-dihydroxybenzoate from benzoate: step 2/2. In terms of biological role, catalyzes the incorporation of an atom of dioxygen into p-hydroxybenzoate (p-OHB) to form 3,4-dihydroxybenzoate (3,4DOHB). The reaction occurs in two parts: reduction of the flavin adenine dinucleotide (FAD) in the enzyme by reduced nicotinamide adenine dinucleotide phosphate (NADPH) in response to binding p-hydroxybenzoate to the enzyme and oxidation of reduced FAD with oxygen to form a hydroperoxide, which then oxygenates p-hydroxybenzoate. The polypeptide is p-hydroxybenzoate hydroxylase (Pseudomonas aeruginosa (strain ATCC 15692 / DSM 22644 / CIP 104116 / JCM 14847 / LMG 12228 / 1C / PRS 101 / PAO1)).